Here is a 173-residue protein sequence, read N- to C-terminus: Small ribosomal subunit protein uS11m (173 aa).

It belongs to the universal ribosomal protein uS11 family.

The protein resides in the mitochondrion. The chain is Small ribosomal subunit protein uS11m (RPS11) from Acanthamoeba castellanii (Amoeba).